The primary structure comprises 163 residues: Zinc finger A20 and AN1 domain-containing stress-associated protein 3 (163 aa).

The A20-type zinc-finger motif lies at 7–41 (LQEPRLCANNCGFFGSTATQNLCSKCFRDLQHQEQ). Zn(2+) is bound by residues C13, C17, C29, and C32. A disordered region spans residues 57–101 (VGAAASSSVSPPPPPPADSKEIVEAKSEKRAAAEPEEADGPPQDP). Basic and acidic residues predominate over residues 74–89 (DSKEIVEAKSEKRAAA). An AN1-type zinc finger spans residues 98–144 (PQDPKRCLTCRRRVGITGFRCRCGFVFCGTHRYAEQHECSFDFKRMG). Zn(2+) is bound by residues C104, C107, C118, C120, C125, H128, H134, and C136.

In terms of biological role, may be involved in environmental stress response. The sequence is that of Zinc finger A20 and AN1 domain-containing stress-associated protein 3 (SAP3) from Arabidopsis thaliana (Mouse-ear cress).